The primary structure comprises 164 residues: Galectin-3 (164 aa).

A Galectin domain is found at 9 to 154; the sequence is STVDLSEPLK…FSDVLGVTVL (146 aa). 6 residues coordinate a carbohydrate: asparagine 45, arginine 64, asparagine 73, arginine 81, glutamate 84, and asparagine 138.

In terms of assembly, homotetramer. Oligomerization is required for carbohydrate binding.

The protein localises to the secreted. It localises to the extracellular space. The protein resides in the extracellular matrix. It is found in the cell wall. Its function is as follows. Binds complex carbohydrates, such as chitooligosaccharides. Does not bind lactose. May play a role in fruiting body formation. The protein is Galectin-3 (Cgl3) of Coprinopsis cinerea (Inky cap fungus).